The chain runs to 313 residues: tRNA dimethylallyltransferase 2 (313 aa).

16 to 23 (GPTASGKT) lines the ATP pocket. 18-23 (TASGKT) contacts substrate. Interaction with substrate tRNA stretches follow at residues 41 to 44 (DSRQ) and 161 to 165 (QRTIR).

The protein belongs to the IPP transferase family. Monomer. Requires Mg(2+) as cofactor.

It catalyses the reaction adenosine(37) in tRNA + dimethylallyl diphosphate = N(6)-dimethylallyladenosine(37) in tRNA + diphosphate. Catalyzes the transfer of a dimethylallyl group onto the adenine at position 37 in tRNAs that read codons beginning with uridine, leading to the formation of N6-(dimethylallyl)adenosine (i(6)A). This is tRNA dimethylallyltransferase 2 from Pelobacter propionicus (strain DSM 2379 / NBRC 103807 / OttBd1).